We begin with the raw amino-acid sequence, 282 residues long: Aquaporin NIP1-1 (282 aa).

2 helical membrane passes run 46–66 (IIAE…AVTI) and 74–94 (ITFP…VYAV). The short motif at 103-105 (NPA) is the NPA 1 element. A run of 3 helical transmembrane segments spans residues 125-145 (VLAQ…MFGG), 162-182 (SLVI…GVAT), and 186-206 (AIGE…VLIA). The NPA 2 signature appears at 215-217 (NPA). Residues 232–252 (IWVYVVGPVVGAVAGAWAYNL) form a helical membrane-spanning segment.

The protein belongs to the MIP/aquaporin (TC 1.A.8) family. NIP (TC 1.A.8.12) subfamily.

The protein resides in the membrane. Its function is as follows. Aquaporins facilitate the transport of water and small neutral solutes across cell membranes. The polypeptide is Aquaporin NIP1-1 (NIP1-1) (Zea mays (Maize)).